A 69-amino-acid chain; its full sequence is Large ribosomal subunit protein bL31 (69 aa).

4 residues coordinate Zn(2+): Cys-17, Cys-19, Cys-37, and Cys-40.

This sequence belongs to the bacterial ribosomal protein bL31 family. Type A subfamily. As to quaternary structure, part of the 50S ribosomal subunit. The cofactor is Zn(2+).

In terms of biological role, binds the 23S rRNA. The chain is Large ribosomal subunit protein bL31 from Caldanaerobacter subterraneus subsp. tengcongensis (strain DSM 15242 / JCM 11007 / NBRC 100824 / MB4) (Thermoanaerobacter tengcongensis).